Consider the following 444-residue polypeptide: Phosphoglucosamine mutase (444 aa).

Ser-102 functions as the Phosphoserine intermediate in the catalytic mechanism. Residues Ser-102, Asp-241, Asp-243, and Asp-245 each coordinate Mg(2+). Ser-102 is modified (phosphoserine).

Belongs to the phosphohexose mutase family. Mg(2+) serves as cofactor. In terms of processing, activated by phosphorylation.

It catalyses the reaction alpha-D-glucosamine 1-phosphate = D-glucosamine 6-phosphate. Functionally, catalyzes the conversion of glucosamine-6-phosphate to glucosamine-1-phosphate. This Histophilus somni (strain 129Pt) (Haemophilus somnus) protein is Phosphoglucosamine mutase.